Reading from the N-terminus, the 333-residue chain is Ferrochelatase (333 aa).

The Fe cation site is built by His-202 and Glu-284.

The protein belongs to the ferrochelatase family.

It is found in the cytoplasm. It carries out the reaction heme b + 2 H(+) = protoporphyrin IX + Fe(2+). The protein operates within porphyrin-containing compound metabolism; protoheme biosynthesis; protoheme from protoporphyrin-IX: step 1/1. Catalyzes the ferrous insertion into protoporphyrin IX. The chain is Ferrochelatase from Francisella tularensis subsp. tularensis (strain FSC 198).